The following is a 155-amino-acid chain: Small ribosomal subunit protein uS7cz/uS7cy (155 aa).

It belongs to the universal ribosomal protein uS7 family. As to quaternary structure, part of the 30S ribosomal subunit.

Its subcellular location is the plastid. The protein localises to the chloroplast. Functionally, one of the primary rRNA binding proteins, it binds directly to 16S rRNA where it nucleates assembly of the head domain of the 30S subunit. In Coffea arabica (Arabian coffee), this protein is Small ribosomal subunit protein uS7cz/uS7cy (rps7-A).